Reading from the N-terminus, the 753-residue chain is 5-methyltetrahydropteroyltriglutamate--homocysteine methyltransferase (753 aa).

5-methyltetrahydropteroyltri-L-glutamate is bound by residues 17 to 20 (RELK) and Lys-117. L-homocysteine-binding positions include 431–433 (IGS) and Glu-484. Residues 431–433 (IGS) and Glu-484 each bind L-methionine. 5-methyltetrahydropteroyltri-L-glutamate contacts are provided by residues 515-516 (RC) and Trp-561. Asp-599 is a binding site for L-homocysteine. An L-methionine-binding site is contributed by Asp-599. Glu-605 provides a ligand contact to 5-methyltetrahydropteroyltri-L-glutamate. Zn(2+) is bound by residues His-641, Cys-643, and Glu-665. The active-site Proton donor is His-694. Zn(2+) is bound at residue Cys-726.

It belongs to the vitamin-B12 independent methionine synthase family. Zn(2+) is required as a cofactor.

The catalysed reaction is 5-methyltetrahydropteroyltri-L-glutamate + L-homocysteine = tetrahydropteroyltri-L-glutamate + L-methionine. It participates in amino-acid biosynthesis; L-methionine biosynthesis via de novo pathway; L-methionine from L-homocysteine (MetE route): step 1/1. Its function is as follows. Catalyzes the transfer of a methyl group from 5-methyltetrahydrofolate to homocysteine resulting in methionine formation. In Escherichia coli O157:H7, this protein is 5-methyltetrahydropteroyltriglutamate--homocysteine methyltransferase.